An 896-amino-acid chain; its full sequence is FHIP family protein C05D11.8 (896 aa).

The segment at 823 to 865 is disordered; the sequence is STASSPRTSDDHDPTLFYGRSTMAPPGRKPLLREPSRQETLDD. Residues 853-865 are compositionally biased toward basic and acidic residues; sequence LLREPSRQETLDD.

The protein belongs to the FHIP family.

In Caenorhabditis elegans, this protein is FHIP family protein C05D11.8.